The chain runs to 438 residues: Aspartate--tRNA(Asp/Asn) ligase (438 aa).

Residue Glu-176 coordinates L-aspartate. The interval 198 to 201 is aspartate; sequence QLYK. Position 220 (Arg-220) interacts with L-aspartate. Residues 220–222, 228–230, and Glu-361 each bind ATP; these read RAE and RHL. Residues Glu-361 and Ser-364 each contribute to the Mg(2+) site. 2 residues coordinate L-aspartate: Ser-364 and Arg-368. 409–412 provides a ligand contact to ATP; that stretch reads GADR.

Belongs to the class-II aminoacyl-tRNA synthetase family. Type 2 subfamily. As to quaternary structure, homodimer. Requires Mg(2+) as cofactor.

Its subcellular location is the cytoplasm. The catalysed reaction is tRNA(Asx) + L-aspartate + ATP = L-aspartyl-tRNA(Asx) + AMP + diphosphate. Aspartyl-tRNA synthetase with relaxed tRNA specificity since it is able to aspartylate not only its cognate tRNA(Asp) but also tRNA(Asn). Reaction proceeds in two steps: L-aspartate is first activated by ATP to form Asp-AMP and then transferred to the acceptor end of tRNA(Asp/Asn). This Methanocaldococcus jannaschii (strain ATCC 43067 / DSM 2661 / JAL-1 / JCM 10045 / NBRC 100440) (Methanococcus jannaschii) protein is Aspartate--tRNA(Asp/Asn) ligase.